A 443-amino-acid polypeptide reads, in one-letter code: D-lactate dehydrogenase (443 aa).

The Extracellular segment spans residues 1–182; that stretch reads MSWIDELSKI…GGKTIKNSSG (182 aa). The region spanning 32 to 209 is the FAD-binding PCMH-type domain; that stretch reads RAAENFVVVK…TKATIRLFPQ (178 aa). Residues 183 to 203 form a helical membrane-spanning segment; that stretch reads YSLLHLLVGSEGTLAVITKAT. Over 204 to 383 the chain is Cytoplasmic; it reads IRLFPQMRDM…WEKSYFEFRK (180 aa). Residues 384–404 form a helical membrane-spanning segment; sequence SLLSLAVSLGGVISGEHGIGA. Residues 405-443 are Extracellular-facing; it reads VKLSELEELFPEQFELMRQIKLLFDPKNILNPGKVVRKL.

The protein belongs to the FAD-binding oxidoreductase/transferase type 4 family. FAD is required as a cofactor. Zn(2+) serves as cofactor.

It is found in the cell membrane. It catalyses the reaction (R)-lactate + A = pyruvate + AH2. Its function is as follows. Catalyzes the dehydrogenation of (R)-lactate (D-lactate) to pyruvate. Is likely involved in the utilization of D-lactate as a sole source for both carbon and electrons for dissimilatory sulfate reduction. Cannot use L-lactate as substrate, and NAD(+), horse cytochrome c, methylene blue or dimethylnaphthoquinone as acceptors. Active in vitro with artificial electron acceptors such as 2,6-dichlorophenolindophenol (DCPIP); the physiological acceptor is not known, but potential acceptors include cytochromes or quinones. The chain is D-lactate dehydrogenase from Archaeoglobus fulgidus (strain ATCC 49558 / DSM 4304 / JCM 9628 / NBRC 100126 / VC-16).